The following is a 70-amino-acid chain: Large ribosomal subunit protein bL28 (70 aa).

The protein belongs to the bacterial ribosomal protein bL28 family.

The chain is Large ribosomal subunit protein bL28 from Maridesulfovibrio salexigens (strain ATCC 14822 / DSM 2638 / NCIMB 8403 / VKM B-1763) (Desulfovibrio salexigens).